Reading from the N-terminus, the 488-residue chain is Phenylalanine--tRNA ligase alpha subunit (488 aa).

L-phenylalanine-binding positions include Thr-315, 354–356 (QLD), Phe-394, and Phe-419.

This sequence belongs to the class-II aminoacyl-tRNA synthetase family. Phe-tRNA synthetase alpha subunit type 2 subfamily. As to quaternary structure, tetramer of two alpha and two beta subunits. The cofactor is Mg(2+).

It is found in the cytoplasm. It carries out the reaction tRNA(Phe) + L-phenylalanine + ATP = L-phenylalanyl-tRNA(Phe) + AMP + diphosphate + H(+). This Pyrobaculum calidifontis (strain DSM 21063 / JCM 11548 / VA1) protein is Phenylalanine--tRNA ligase alpha subunit.